Consider the following 200-residue polypeptide: Small ribosomal subunit protein mS38 (200 aa).

The protein belongs to the mitochondrion-specific ribosomal protein mS38 family. As to quaternary structure, component of the mitochondrial ribosome small subunit (28S) which comprises a 12S rRNA and about 30 distinct proteins. Interacts with Aurora-A. As to expression, ubiquitously expressed and especially highly expressed in heart, skeletal muscle and testis.

Its subcellular location is the mitochondrion matrix. It is found in the nucleus. Functionally, may act as a negative regulator of Aurora-A kinase, by down-regulation through proteasome-dependent degradation. This is Small ribosomal subunit protein mS38 (Aurkaip1) from Mus musculus (Mouse).